The chain runs to 161 residues: Large ribosomal subunit protein bL17 (161 aa).

Residues 132–144 (ARAKRAEDNRKAL) are compositionally biased toward basic and acidic residues. Positions 132–161 (ARAKRAEDNRKALEAQQAQAEAETTGETKA) are disordered. Residues 145-161 (EAQQAQAEAETTGETKA) show a composition bias toward low complexity.

This sequence belongs to the bacterial ribosomal protein bL17 family. As to quaternary structure, part of the 50S ribosomal subunit. Contacts protein L32.

The sequence is that of Large ribosomal subunit protein bL17 from Koribacter versatilis (strain Ellin345).